The chain runs to 364 residues: UDP-N-acetylglucosamine--N-acetylmuramyl-(pentapeptide) pyrophosphoryl-undecaprenol N-acetylglucosamine transferase (364 aa).

Residues threonine 13–glycine 15, asparagine 125, arginine 165, serine 192, and glutamine 293 each bind UDP-N-acetyl-alpha-D-glucosamine.

It belongs to the glycosyltransferase 28 family. MurG subfamily.

The protein resides in the cell inner membrane. It catalyses the reaction di-trans,octa-cis-undecaprenyl diphospho-N-acetyl-alpha-D-muramoyl-L-alanyl-D-glutamyl-meso-2,6-diaminopimeloyl-D-alanyl-D-alanine + UDP-N-acetyl-alpha-D-glucosamine = di-trans,octa-cis-undecaprenyl diphospho-[N-acetyl-alpha-D-glucosaminyl-(1-&gt;4)]-N-acetyl-alpha-D-muramoyl-L-alanyl-D-glutamyl-meso-2,6-diaminopimeloyl-D-alanyl-D-alanine + UDP + H(+). It functions in the pathway cell wall biogenesis; peptidoglycan biosynthesis. Functionally, cell wall formation. Catalyzes the transfer of a GlcNAc subunit on undecaprenyl-pyrophosphoryl-MurNAc-pentapeptide (lipid intermediate I) to form undecaprenyl-pyrophosphoryl-MurNAc-(pentapeptide)GlcNAc (lipid intermediate II). This is UDP-N-acetylglucosamine--N-acetylmuramyl-(pentapeptide) pyrophosphoryl-undecaprenol N-acetylglucosamine transferase from Cereibacter sphaeroides (strain ATCC 17029 / ATH 2.4.9) (Rhodobacter sphaeroides).